We begin with the raw amino-acid sequence, 280 residues long: Large ribosomal subunit protein uL2 (280 aa).

Disordered regions lie at residues 27 to 58 (STPE…GGGH) and 226 to 280 (MNPV…KHGR). 2 stretches are compositionally biased toward basic residues: residues 37–58 (LHGH…GGGH) and 268–280 (IVRR…KHGR).

Belongs to the universal ribosomal protein uL2 family. In terms of assembly, part of the 50S ribosomal subunit. Forms a bridge to the 30S subunit in the 70S ribosome.

In terms of biological role, one of the primary rRNA binding proteins. Required for association of the 30S and 50S subunits to form the 70S ribosome, for tRNA binding and peptide bond formation. It has been suggested to have peptidyltransferase activity; this is somewhat controversial. Makes several contacts with the 16S rRNA in the 70S ribosome. The chain is Large ribosomal subunit protein uL2 from Mycobacterium ulcerans (strain Agy99).